The following is a 241-amino-acid chain: tRNA pseudouridine synthase B (241 aa).

Residue Asp45 is the Nucleophile of the active site.

Belongs to the pseudouridine synthase TruB family. Type 1 subfamily.

The catalysed reaction is uridine(55) in tRNA = pseudouridine(55) in tRNA. In terms of biological role, responsible for synthesis of pseudouridine from uracil-55 in the psi GC loop of transfer RNAs. The polypeptide is tRNA pseudouridine synthase B (Chlamydia muridarum (strain MoPn / Nigg)).